The primary structure comprises 240 residues: MQHRPQLFYTTAPAPCPYLPDRTERKVLTELAGPDAVALHNRLSQAGFRRSHAIAYAPVCVGCRACTPMRIPAATFAPTRTQKKIRSRHTDLVVNIIPPVPTDEQFRLFEMYQAVRHPDGDMAHMCWRDYAELIANTPVETFLAEFRRPDGTLVCVSLMDRLSDGLSAVYTFYDVNDLTASWGTFSILWLIEETARLGLEHLYLGYYVPGSPKMAYKAAFGPPEVFRDGQWSLLAALSPA.

This sequence belongs to the R-transferase family. Bpt subfamily.

It is found in the cytoplasm. The enzyme catalyses N-terminal L-glutamyl-[protein] + L-leucyl-tRNA(Leu) = N-terminal L-leucyl-L-glutamyl-[protein] + tRNA(Leu) + H(+). It catalyses the reaction N-terminal L-aspartyl-[protein] + L-leucyl-tRNA(Leu) = N-terminal L-leucyl-L-aspartyl-[protein] + tRNA(Leu) + H(+). In terms of biological role, functions in the N-end rule pathway of protein degradation where it conjugates Leu from its aminoacyl-tRNA to the N-termini of proteins containing an N-terminal aspartate or glutamate. The sequence is that of Aspartate/glutamate leucyltransferase from Gluconobacter oxydans (strain 621H) (Gluconobacter suboxydans).